Consider the following 478-residue polypeptide: Nuclear distribution protein PAC1 (478 aa).

Positions 9–41 (QAEELHKAMIAYLLSANLPKSAAALREELADSV) constitute a LisH domain. The stretch at 60–87 (TSVVRLQKKIMDLESRNNALQSELDSAT) forms a coiled coil. WD repeat units lie at residues 113 to 154 (SHRE…RTIK), 156 to 196 (HTKA…KNIR), 200 to 247 (GHDH…CVKT), 250 to 289 (GHVD…TKST), 292 to 352 (GHEH…IKTL), 354 to 393 (GHDN…KCVR), 398 to 439 (AHGH…GASA), and 440 to 477 (INGV…RVFA).

It belongs to the WD repeat LIS1/nudF family. As to quaternary structure, self-associates. Interacts with NDL1 and dynein.

It localises to the cytoplasm. The protein localises to the cytoskeleton. It is found in the spindle pole. Its function is as follows. Positively regulates the activity of the minus-end directed microtubule motor protein dynein. May enhance dynein-mediated microtubule sliding by targeting dynein to the microtubule plus end. Required for nuclear migration during vegetative growth as well as development. Required for retrograde early endosome (EE) transport from the hyphal tip. Required for localization of dynein to the mitotic spindle poles. Recruits additional proteins to the dynein complex at SPBs. This is Nuclear distribution protein PAC1 from Paracoccidioides brasiliensis (strain Pb03).